A 129-amino-acid polypeptide reads, in one-letter code: Protein Turandot A (129 aa).

The N-terminal stretch at 1-21 (MNSSTALMCFALLLISPLCMG) is a signal peptide. Asparagine 49 carries N-linked (GlcNAc...) asparagine glycosylation.

It belongs to the Turandot family. As to expression, expressed in the fat body (at protein level).

The protein localises to the secreted. A humoral factor that plays a role in stress tolerance; gives increased resistance to the lethal effects of bacterial challenge and stress. Regulated by the JAK/STAT pathway and NF-KB-like Relish pathway in the fat body, upd3 in the hemocytes and Mekk1 in response to septic injury and consequent immune response. This Drosophila melanogaster (Fruit fly) protein is Protein Turandot A.